A 184-amino-acid polypeptide reads, in one-letter code: Signal peptidase complex catalytic subunit SEC11 (184 aa).

The Cytoplasmic segment spans residues 1 to 28; it reads MDFIKEQYNSLVLDLRKTFRNKRDGLSH. The helical; Signal-anchor for type II membrane protein transmembrane segment at 29-49 threads the bilayer; sequence ILNVICLLLNALMIWKLLVVF. The Lumenal portion of the chain corresponds to 50-184; it reads TGCESPVVVV…MLIMILMGYE (135 aa). Active-site charge relay system residues include Ser-63, His-101, and Asp-127. The C-terminal short (CTS) helix stretch occupies residues 170–181; sequence AIVSIMLIMILM.

The protein belongs to the peptidase S26B family. Component of the signal peptidase complex (SPC) composed of a catalytic subunit SEC11/SPC21 and three accessory subunits SPC25, SPC3/SPC22, SPC1/SPC12. Within the complex, interacts with SPC25. The complex induces a local thinning of the ER membrane which is used to measure the length of the signal peptide (SP) h-region of protein substrates. This ensures the selectivity of the complex towards h-regions shorter than 18-20 amino acids. The complex interacts with the SEC61 channel-forming translocon complex and is involved in the import of classical signal sequence-containing proteins. In terms of processing, phosphorylated. Phosphorylation increases catalytic activity.

It is found in the endoplasmic reticulum membrane. The enzyme catalyses Cleavage of hydrophobic, N-terminal signal or leader sequences from secreted and periplasmic proteins.. Phosphorylation increases catalytic activity. Ca(2+) slightly increases catalytic activity in vitro. Functionally, catalytic component of the signal peptidase complex (SPC) which catalyzes the cleavage of N-terminal signal sequences from nascent proteins as they are translocated into the lumen of the endoplasmic reticulum. Specifically cleaves N-terminal signal peptides that contain a hydrophobic alpha-helix (h-region) shorter than 18-20 amino acids. In Plasmodium falciparum (isolate 3D7), this protein is Signal peptidase complex catalytic subunit SEC11.